We begin with the raw amino-acid sequence, 639 residues long: Extracellular metalloproteinase 9 (639 aa).

The signal sequence occupies residues 1-19 (MHGLLLAAGLLSLPLRALG). A propeptide spanning residues 20–250 (HPNPNPQMHT…IHGVVDYVAD (231 aa)) is cleaved from the precursor. Asparagine 278 carries N-linked (GlcNAc...) asparagine glycosylation. The interval 293-312 (PTTRGNNGIAQDNPSGGNQY) is disordered. Histidine 434 contacts Zn(2+). The active site involves glutamate 435. Histidine 438 lines the Zn(2+) pocket.

Belongs to the peptidase M36 family. Zn(2+) serves as cofactor.

It is found in the secreted. Its function is as follows. Secreted metalloproteinase that allows assimilation of proteinaceous substrates and probably acts as a virulence factor. This is Extracellular metalloproteinase 9 (MEP9) from Coccidioides posadasii (strain C735) (Valley fever fungus).